The sequence spans 254 residues: NAD-dependent protein deacylase (254 aa).

One can recognise a Deacetylase sirtuin-type domain in the interval Met-1–Glu-250. Gly-22 to Trp-41 is a binding site for NAD(+). Tyr-66 and Arg-69 together coordinate substrate. Gln-104–Asp-107 serves as a coordination point for NAD(+). His-122 functions as the Proton acceptor in the catalytic mechanism. Zn(2+) is bound by residues Cys-130, Cys-133, Cys-149, and Cys-152. NAD(+)-binding positions include Gly-189 to Ser-191, Asn-215 to Glu-217, and Ala-233.

This sequence belongs to the sirtuin family. Class III subfamily. The cofactor is Zn(2+).

The protein resides in the cytoplasm. The enzyme catalyses N(6)-acetyl-L-lysyl-[protein] + NAD(+) + H2O = 2''-O-acetyl-ADP-D-ribose + nicotinamide + L-lysyl-[protein]. It catalyses the reaction N(6)-succinyl-L-lysyl-[protein] + NAD(+) + H2O = 2''-O-succinyl-ADP-D-ribose + nicotinamide + L-lysyl-[protein]. In terms of biological role, NAD-dependent lysine deacetylase and desuccinylase that specifically removes acetyl and succinyl groups on target proteins. Modulates the activities of several proteins which are inactive in their acylated form. This chain is NAD-dependent protein deacylase, found in Thermus thermophilus (strain ATCC 27634 / DSM 579 / HB8).